The sequence spans 434 residues: GTPase Obg (434 aa).

The region spanning Met-1–Leu-158 is the Obg domain. Residues Ala-159–Asp-336 form the OBG-type G domain. Residues Gly-165–Ser-172, Phe-190–Val-194, Asp-212–Gly-215, Asn-282–Asp-285, and Ser-317–Leu-319 contribute to the GTP site. Residues Ser-172 and Thr-192 each contribute to the Mg(2+) site. The OCT domain occupies Gly-356 to Asp-434.

The protein belongs to the TRAFAC class OBG-HflX-like GTPase superfamily. OBG GTPase family. Monomer. The cofactor is Mg(2+).

It is found in the cytoplasm. Its function is as follows. An essential GTPase which binds GTP, GDP and possibly (p)ppGpp with moderate affinity, with high nucleotide exchange rates and a fairly low GTP hydrolysis rate. Plays a role in control of the cell cycle, stress response, ribosome biogenesis and in those bacteria that undergo differentiation, in morphogenesis control. In Streptococcus pneumoniae serotype 19F (strain G54), this protein is GTPase Obg.